Here is a 342-residue protein sequence, read N- to C-terminus: Dihydroorotate dehydrogenase (quinone) (342 aa).

FMN is bound by residues 61-65 and T85; that span reads AGLDK. K65 contacts substrate. 110–114 is a binding site for substrate; that stretch reads NRMGF. FMN-binding residues include N138 and N171. N171 is a binding site for substrate. Residue S174 is the Nucleophile of the active site. N176 contacts substrate. Residues K216 and T244 each coordinate FMN. 245–246 lines the substrate pocket; sequence NT. FMN contacts are provided by residues G267, G296, and 317–318; that span reads YS.

It belongs to the dihydroorotate dehydrogenase family. Type 2 subfamily. In terms of assembly, monomer. Requires FMN as cofactor.

Its subcellular location is the cell membrane. It carries out the reaction (S)-dihydroorotate + a quinone = orotate + a quinol. The protein operates within pyrimidine metabolism; UMP biosynthesis via de novo pathway; orotate from (S)-dihydroorotate (quinone route): step 1/1. In terms of biological role, catalyzes the conversion of dihydroorotate to orotate with quinone as electron acceptor. This Cellvibrio japonicus (strain Ueda107) (Pseudomonas fluorescens subsp. cellulosa) protein is Dihydroorotate dehydrogenase (quinone).